We begin with the raw amino-acid sequence, 182 residues long: Isopentenyl-diphosphate Delta-isomerase (182 aa).

The Mn(2+) site is built by His25 and His32. Residues 30–164 form the Nudix hydrolase domain; the sequence is LLHLAFSSWL…PWAFSPWMVM (135 aa). The active site involves Cys67. Mn(2+) is bound at residue His69. Residue Glu87 coordinates Mg(2+). Mn(2+)-binding residues include Glu114 and Glu116. The active site involves Glu116.

Belongs to the IPP isomerase type 1 family. As to quaternary structure, homodimer. Mg(2+) serves as cofactor. Mn(2+) is required as a cofactor.

It localises to the cytoplasm. It carries out the reaction isopentenyl diphosphate = dimethylallyl diphosphate. Its pathway is isoprenoid biosynthesis; dimethylallyl diphosphate biosynthesis; dimethylallyl diphosphate from isopentenyl diphosphate: step 1/1. Its function is as follows. Catalyzes the 1,3-allylic rearrangement of the homoallylic substrate isopentenyl (IPP) to its highly electrophilic allylic isomer, dimethylallyl diphosphate (DMAPP). This Escherichia coli O7:K1 (strain IAI39 / ExPEC) protein is Isopentenyl-diphosphate Delta-isomerase.